The sequence spans 307 residues: Elongation factor Ts (307 aa).

The tract at residues Thr-80 to Val-83 is involved in Mg(2+) ion dislocation from EF-Tu.

This sequence belongs to the EF-Ts family.

It localises to the cytoplasm. In terms of biological role, associates with the EF-Tu.GDP complex and induces the exchange of GDP to GTP. It remains bound to the aminoacyl-tRNA.EF-Tu.GTP complex up to the GTP hydrolysis stage on the ribosome. This Variovorax paradoxus (strain S110) protein is Elongation factor Ts.